The following is a 199-amino-acid chain: Ribonuclease HII (199 aa).

The 187-residue stretch at 13–199 folds into the RNase H type-2 domain; the sequence is GLVAGVDEVG…FAPIAKILCG (187 aa). A divalent metal cation is bound by residues Asp19, Glu20, and Asp110.

This sequence belongs to the RNase HII family. Mn(2+) is required as a cofactor. It depends on Mg(2+) as a cofactor.

Its subcellular location is the cytoplasm. The catalysed reaction is Endonucleolytic cleavage to 5'-phosphomonoester.. Functionally, endonuclease that specifically degrades the RNA of RNA-DNA hybrids. The protein is Ribonuclease HII of Jannaschia sp. (strain CCS1).